Consider the following 318-residue polypeptide: tRNA U34 carboxymethyltransferase (318 aa).

Carboxy-S-adenosyl-L-methionine is bound by residues Lys-85, Trp-99, Lys-104, Gly-124, 175 to 176, Met-190, Tyr-194, and Arg-311; that span reads LD.

This sequence belongs to the class I-like SAM-binding methyltransferase superfamily. CmoB family. In terms of assembly, homotetramer.

It catalyses the reaction carboxy-S-adenosyl-L-methionine + 5-hydroxyuridine(34) in tRNA = 5-carboxymethoxyuridine(34) in tRNA + S-adenosyl-L-homocysteine + H(+). In terms of biological role, catalyzes carboxymethyl transfer from carboxy-S-adenosyl-L-methionine (Cx-SAM) to 5-hydroxyuridine (ho5U) to form 5-carboxymethoxyuridine (cmo5U) at position 34 in tRNAs. In Ruthia magnifica subsp. Calyptogena magnifica, this protein is tRNA U34 carboxymethyltransferase.